The following is a 236-amino-acid chain: Peptidase E (236 aa).

Catalysis depends on charge relay system residues Ser122, Asp137, and His159.

This sequence belongs to the peptidase S51 family.

The protein localises to the cytoplasm. It carries out the reaction Dipeptidase E catalyzes the hydrolysis of dipeptides Asp-|-Xaa. It does not act on peptides with N-terminal Glu, Asn or Gln, nor does it cleave isoaspartyl peptides.. Functionally, hydrolyzes dipeptides containing N-terminal aspartate residues. May play a role in allowing the cell to use peptide aspartate to spare carbon otherwise required for the synthesis of the aspartate family of amino acids. The polypeptide is Peptidase E (Shewanella sp. (strain W3-18-1)).